Here is a 102-residue protein sequence, read N- to C-terminus: uncharacterized protein (102 aa).

This is an uncharacterized protein from Escherichia coli (Bacteriophage T4).